The primary structure comprises 644 residues: Exoribonuclease 2 (644 aa).

An RNB domain is found at 189–516; it reads RQDLTALNFV…NHRLLKAVIK (328 aa). The S1 motif domain maps to 561-643; the sequence is NTRFAAEIID…ETRSIIARPA (83 aa).

Belongs to the RNR ribonuclease family. RNase II subfamily.

Its subcellular location is the cytoplasm. It catalyses the reaction Exonucleolytic cleavage in the 3'- to 5'-direction to yield nucleoside 5'-phosphates.. Its function is as follows. Involved in mRNA degradation. Hydrolyzes single-stranded polyribonucleotides processively in the 3' to 5' direction. The polypeptide is Exoribonuclease 2 (Salmonella dublin (strain CT_02021853)).